Reading from the N-terminus, the 272-residue chain is Regulatory protein RecX (272 aa).

Belongs to the RecX family.

It localises to the cytoplasm. Its function is as follows. Modulates RecA activity. This Oceanobacillus iheyensis (strain DSM 14371 / CIP 107618 / JCM 11309 / KCTC 3954 / HTE831) protein is Regulatory protein RecX.